Reading from the N-terminus, the 632-residue chain is 1-deoxy-D-xylulose-5-phosphate synthase (632 aa).

Thiamine diphosphate is bound by residues H77 and 118-120 (GHS). Residue D149 participates in Mg(2+) binding. Residues 150 to 151 (GA), N178, Y289, and E372 contribute to the thiamine diphosphate site. N178 is a Mg(2+) binding site.

It belongs to the transketolase family. DXPS subfamily. In terms of assembly, homodimer. Mg(2+) is required as a cofactor. Requires thiamine diphosphate as cofactor.

The enzyme catalyses D-glyceraldehyde 3-phosphate + pyruvate + H(+) = 1-deoxy-D-xylulose 5-phosphate + CO2. It participates in metabolic intermediate biosynthesis; 1-deoxy-D-xylulose 5-phosphate biosynthesis; 1-deoxy-D-xylulose 5-phosphate from D-glyceraldehyde 3-phosphate and pyruvate: step 1/1. Functionally, catalyzes the acyloin condensation reaction between C atoms 2 and 3 of pyruvate and glyceraldehyde 3-phosphate to yield 1-deoxy-D-xylulose-5-phosphate (DXP). The protein is 1-deoxy-D-xylulose-5-phosphate synthase of Listeria innocua serovar 6a (strain ATCC BAA-680 / CLIP 11262).